The following is a 380-amino-acid chain: Cytochrome b (380 aa).

The next 4 membrane-spanning stretches (helical) occupy residues 34 to 54, 78 to 99, 114 to 134, and 179 to 199; these read FGSL…LLAT, WLIR…YLHI, WNTG…GYVL, and FFAL…IHLT. Heme b-binding residues include histidine 84 and histidine 98. Residues histidine 183 and histidine 197 each contribute to the heme b site. Position 202 (histidine 202) interacts with a ubiquinone. The next 4 membrane-spanning stretches (helical) occupy residues 227 to 247, 289 to 309, 321 to 341, and 348 to 368; these read LKDI…ALFS, LGGV…PLLH, LSQL…WVGS, and FIII…LLFP.

The protein belongs to the cytochrome b family. As to quaternary structure, the cytochrome bc1 complex contains 11 subunits: 3 respiratory subunits (MT-CYB, CYC1 and UQCRFS1), 2 core proteins (UQCRC1 and UQCRC2) and 6 low-molecular weight proteins (UQCRH/QCR6, UQCRB/QCR7, UQCRQ/QCR8, UQCR10/QCR9, UQCR11/QCR10 and a cleavage product of UQCRFS1). This cytochrome bc1 complex then forms a dimer. Requires heme b as cofactor.

The protein localises to the mitochondrion inner membrane. In terms of biological role, component of the ubiquinol-cytochrome c reductase complex (complex III or cytochrome b-c1 complex) that is part of the mitochondrial respiratory chain. The b-c1 complex mediates electron transfer from ubiquinol to cytochrome c. Contributes to the generation of a proton gradient across the mitochondrial membrane that is then used for ATP synthesis. The chain is Cytochrome b (MT-CYB) from Uria aalge (Common mure).